The following is a 444-amino-acid chain: Trigger factor (444 aa).

The PPIase FKBP-type domain occupies 166-251; it reads GDQVVIDFKG…VKAVKAPKAA (86 aa).

It belongs to the FKBP-type PPIase family. Tig subfamily.

The protein resides in the cytoplasm. The enzyme catalyses [protein]-peptidylproline (omega=180) = [protein]-peptidylproline (omega=0). In terms of biological role, involved in protein export. Acts as a chaperone by maintaining the newly synthesized protein in an open conformation. Functions as a peptidyl-prolyl cis-trans isomerase. This is Trigger factor from Cereibacter sphaeroides (strain ATCC 17029 / ATH 2.4.9) (Rhodobacter sphaeroides).